We begin with the raw amino-acid sequence, 177 residues long: Large ribosomal subunit protein uL6 (177 aa).

The protein belongs to the universal ribosomal protein uL6 family. In terms of assembly, part of the 50S ribosomal subunit.

In terms of biological role, this protein binds to the 23S rRNA, and is important in its secondary structure. It is located near the subunit interface in the base of the L7/L12 stalk, and near the tRNA binding site of the peptidyltransferase center. This is Large ribosomal subunit protein uL6 from Haemophilus influenzae (strain 86-028NP).